We begin with the raw amino-acid sequence, 318 residues long: NADH-ubiquinone oxidoreductase chain 1 (318 aa).

8 consecutive transmembrane segments (helical) span residues 3–23, 69–89, 100–120, 135–155, 171–191, 223–243, 253–273, and 293–313; these read LINV…LTLL, LMFT…WIPI, LGVL…LWSG, AVAQ…SIMM, HMWL…STLA, FFLA…ILFF, ELHT…FLWV, and FLPL…TFAG.

The protein belongs to the complex I subunit 1 family.

Its subcellular location is the mitochondrion inner membrane. It carries out the reaction a ubiquinone + NADH + 5 H(+)(in) = a ubiquinol + NAD(+) + 4 H(+)(out). Core subunit of the mitochondrial membrane respiratory chain NADH dehydrogenase (Complex I) that is believed to belong to the minimal assembly required for catalysis. Complex I functions in the transfer of electrons from NADH to the respiratory chain. The immediate electron acceptor for the enzyme is believed to be ubiquinone. The polypeptide is NADH-ubiquinone oxidoreductase chain 1 (MT-ND1) (Dasypus novemcinctus (Nine-banded armadillo)).